Here is a 313-residue protein sequence, read N- to C-terminus: Ribosomal RNA small subunit methyltransferase H (313 aa).

Residues 35–37 (GGH), aspartate 55, phenylalanine 80, aspartate 102, and glutamine 109 contribute to the S-adenosyl-L-methionine site.

Belongs to the methyltransferase superfamily. RsmH family.

Its subcellular location is the cytoplasm. The enzyme catalyses cytidine(1402) in 16S rRNA + S-adenosyl-L-methionine = N(4)-methylcytidine(1402) in 16S rRNA + S-adenosyl-L-homocysteine + H(+). Functionally, specifically methylates the N4 position of cytidine in position 1402 (C1402) of 16S rRNA. This is Ribosomal RNA small subunit methyltransferase H from Shewanella sp. (strain MR-7).